The sequence spans 543 residues: MFS-type transporter pyvG (543 aa).

The tract at residues 24–71 is disordered; that stretch reads PPTEQQPGFQLPPPYRLAATRTQPQQQQEQEQEQEQAKPATRPPWNEP. N-linked (GlcNAc...) asparagine glycosylation is present at N94. The next 12 helical transmembrane spans lie at 101–121, 141–161, 178–198, 203–223, 230–250, 259–279, 335–355, 374–394, 415–435, 440–460, 476–496, and 512–532; these read LLVY…VAIF, LGMS…SPLS, IFLL…FLIL, GFFG…VTGL, LYVW…IAGF, WSMW…LFLP, PAIL…YSYF, GLIF…YFAF, LVPA…FAWT, LHWV…SLVI, ASLF…AIMW, and LLAG…WWGP.

It belongs to the major facilitator superfamily. CAR1 family.

The protein resides in the cell membrane. MFS-type transporter; part of the gene cluster that mediates the biosynthesis of pyranoviolin A, a pyranonigrin analog with a C-3 methoxy group. May be involved in the secretion of pyranoviolin A. The chain is MFS-type transporter pyvG from Aspergillus violaceofuscus (strain CBS 115571).